Here is a 631-residue protein sequence, read N- to C-terminus: Phosphomethylpyrimidine synthase (631 aa).

Substrate contacts are provided by residues N239, M268, Y297, H333, 353 to 355 (SRG), 394 to 397 (DGLR), and E433. H437 serves as a coordination point for Zn(2+). Y460 contributes to the substrate binding site. Residue H501 participates in Zn(2+) binding. [4Fe-4S] cluster contacts are provided by C581, C584, and C589.

It belongs to the ThiC family. In terms of assembly, homodimer. The cofactor is [4Fe-4S] cluster.

The enzyme catalyses 5-amino-1-(5-phospho-beta-D-ribosyl)imidazole + S-adenosyl-L-methionine = 4-amino-2-methyl-5-(phosphooxymethyl)pyrimidine + CO + 5'-deoxyadenosine + formate + L-methionine + 3 H(+). The protein operates within cofactor biosynthesis; thiamine diphosphate biosynthesis. In terms of biological role, catalyzes the synthesis of the hydroxymethylpyrimidine phosphate (HMP-P) moiety of thiamine from aminoimidazole ribotide (AIR) in a radical S-adenosyl-L-methionine (SAM)-dependent reaction. In Escherichia coli O127:H6 (strain E2348/69 / EPEC), this protein is Phosphomethylpyrimidine synthase.